Consider the following 899-residue polypeptide: Probable disease resistance protein RXW24L (899 aa).

Residues 13 to 50 (DRLSQEYDQFKGVEDQVTELKSNLNLLKSFLKDADAKK) are a coiled coil. The 313-residue stretch at 143–455 (LQERQREMRH…AEGISERRRY (313 aa)) folds into the NB-ARC domain. 189–196 (GMGGLGKT) contributes to the ATP binding site.

Belongs to the disease resistance NB-LRR family.

In terms of biological role, potential disease resistance protein. The protein is Probable disease resistance protein RXW24L (RXW24L) of Arabidopsis thaliana (Mouse-ear cress).